The following is a 243-amino-acid chain: Lipid II isoglutaminyl synthase (glutamine-hydrolyzing) subunit GatD (243 aa).

Residues 6–197 (IYHFMSDKLN…LHGPILPKNY (192 aa)) enclose the GATase cobBQ-type domain. Cys-94 (nucleophile) is an active-site residue. Arg-128 contributes to the substrate binding site. The active site involves His-189.

It belongs to the CobB/CobQ family. GatD subfamily. As to quaternary structure, forms a heterodimer with MurT.

The catalysed reaction is beta-D-GlcNAc-(1-&gt;4)-Mur2Ac(oyl-L-Ala-gamma-D-Glu-L-Lys-D-Ala-D-Ala)-di-trans,octa-cis-undecaprenyl diphosphate + L-glutamine + ATP + H2O = beta-D-GlcNAc-(1-&gt;4)-Mur2Ac(oyl-L-Ala-D-isoglutaminyl-L-Lys-D-Ala-D-Ala)-di-trans,octa-cis-undecaprenyl diphosphate + L-glutamate + ADP + phosphate + H(+). It carries out the reaction L-glutamine + H2O = L-glutamate + NH4(+). The protein operates within cell wall biogenesis; peptidoglycan biosynthesis. Its function is as follows. The lipid II isoglutaminyl synthase complex catalyzes the formation of alpha-D-isoglutamine in the cell wall lipid II stem peptide. The GatD subunit catalyzes the hydrolysis of glutamine to glutamate and ammonia. The resulting ammonia molecule is channeled to the active site of MurT. This is Lipid II isoglutaminyl synthase (glutamine-hydrolyzing) subunit GatD from Staphylococcus aureus (strain N315).